We begin with the raw amino-acid sequence, 176 residues long: Peptide methionine sulfoxide reductase MsrA (176 aa).

C10 is a catalytic residue.

It belongs to the MsrA Met sulfoxide reductase family.

The catalysed reaction is L-methionyl-[protein] + [thioredoxin]-disulfide + H2O = L-methionyl-(S)-S-oxide-[protein] + [thioredoxin]-dithiol. It carries out the reaction [thioredoxin]-disulfide + L-methionine + H2O = L-methionine (S)-S-oxide + [thioredoxin]-dithiol. Functionally, has an important function as a repair enzyme for proteins that have been inactivated by oxidation. Catalyzes the reversible oxidation-reduction of methionine sulfoxide in proteins to methionine. The polypeptide is Peptide methionine sulfoxide reductase MsrA (Leptospira borgpetersenii serovar Hardjo-bovis (strain L550)).